We begin with the raw amino-acid sequence, 283 residues long: Probable endonuclease 4 (283 aa).

Positions 66, 106, 141, 174, 177, 211, 224, 226, and 256 each coordinate Zn(2+).

Belongs to the AP endonuclease 2 family. Zn(2+) serves as cofactor.

It catalyses the reaction Endonucleolytic cleavage to 5'-phosphooligonucleotide end-products.. Functionally, endonuclease IV plays a role in DNA repair. It cleaves phosphodiester bonds at apurinic or apyrimidinic (AP) sites, generating a 3'-hydroxyl group and a 5'-terminal sugar phosphate. This is Probable endonuclease 4 from Carboxydothermus hydrogenoformans (strain ATCC BAA-161 / DSM 6008 / Z-2901).